We begin with the raw amino-acid sequence, 484 residues long: tRNA sulfurtransferase (484 aa).

Residues 63-167 (EAFAERLACI…NDNLYLIDKR (105 aa)) form the THUMP domain. Residues 185–186 (LI), lysine 267, glycine 289, and glutamine 298 each bind ATP. An intrachain disulfide couples cysteine 346 to cysteine 458. The Rhodanese domain maps to 406-484 (ISAGEIIIDV…GYNNVKVYRP (79 aa)). Catalysis depends on cysteine 458, which acts as the Cysteine persulfide intermediate.

It belongs to the ThiI family.

Its subcellular location is the cytoplasm. It catalyses the reaction [ThiI sulfur-carrier protein]-S-sulfanyl-L-cysteine + a uridine in tRNA + 2 reduced [2Fe-2S]-[ferredoxin] + ATP + H(+) = [ThiI sulfur-carrier protein]-L-cysteine + a 4-thiouridine in tRNA + 2 oxidized [2Fe-2S]-[ferredoxin] + AMP + diphosphate. It carries out the reaction [ThiS sulfur-carrier protein]-C-terminal Gly-Gly-AMP + S-sulfanyl-L-cysteinyl-[cysteine desulfurase] + AH2 = [ThiS sulfur-carrier protein]-C-terminal-Gly-aminoethanethioate + L-cysteinyl-[cysteine desulfurase] + A + AMP + 2 H(+). Its pathway is cofactor biosynthesis; thiamine diphosphate biosynthesis. Its function is as follows. Catalyzes the ATP-dependent transfer of a sulfur to tRNA to produce 4-thiouridine in position 8 of tRNAs, which functions as a near-UV photosensor. Also catalyzes the transfer of sulfur to the sulfur carrier protein ThiS, forming ThiS-thiocarboxylate. This is a step in the synthesis of thiazole, in the thiamine biosynthesis pathway. The sulfur is donated as persulfide by IscS. The polypeptide is tRNA sulfurtransferase (Shewanella pealeana (strain ATCC 700345 / ANG-SQ1)).